We begin with the raw amino-acid sequence, 854 residues long: Envelope glycoprotein B (854 aa).

An N-terminal signal peptide occupies residues 1-30 (MSKNWFPLLCASVLVVYVSIASSSTGTASG). Over 31-723 (AVTPTSPTEN…EGVVGFIKNP (693 aa)) the chain is Virion surface. 3 N-linked (GlcNAc...) asparagine; by host glycosylation sites follow: N40, N48, and N60. 5 disulfide bridges follow: C69/C524, C86/C480, C160/C225, C317/C364, and C546/C583. The segment at 127–133 (SYSFIRE) is involved in fusion and/or binding to host membrane. The N-linked (GlcNAc...) asparagine; by host glycan is linked to N183. Positions 212 to 219 (GSTWLYTT) are involved in fusion and/or binding to host membrane. N256, N275, N314, N356, N378, N382, N390, N423, N426, N442, N558, and N595 each carry an N-linked (GlcNAc...) asparagine; by host glycan. Hydrophobic membrane proximal region regions lie at residues 669-721 (VEGK…GFIK) and 700-720 (VAIG…VGFI). A helical membrane pass occupies residues 724-744 (FGSFTVILFLLAVLGVIYLIY). Residues 745 to 854 (MRQKRAYEKP…YQKIQNEYEV (110 aa)) are Intravirion-facing.

The protein belongs to the herpesviridae glycoprotein B family. In terms of assembly, homotrimer; disulfide-linked. Binds to heparan sulfate proteoglycans. Interacts with gH/gL heterodimer. Post-translationally, a proteolytic cleavage by host furin generates two subunits that remain linked by disulfide bonds.

Its subcellular location is the virion membrane. It is found in the host cell membrane. The protein resides in the host endosome membrane. It localises to the host Golgi apparatus membrane. Its function is as follows. Envelope glycoprotein that forms spikes at the surface of virion envelope. Essential for the initial attachment to heparan sulfate moieties of the host cell surface proteoglycans. Involved in fusion of viral and cellular membranes leading to virus entry into the host cell. Following initial binding to its host receptors, membrane fusion is mediated by the fusion machinery composed at least of gB and the heterodimer gH/gL. May be involved in the fusion between the virion envelope and the outer nuclear membrane during virion egress. The sequence is that of Envelope glycoprotein B from Macaca mulatta (Rhesus macaque).